Consider the following 131-residue polypeptide: Small ribosomal subunit protein uS11 (131 aa).

The protein belongs to the universal ribosomal protein uS11 family. Part of the 30S ribosomal subunit. Interacts with proteins S7 and S18. Binds to IF-3.

Located on the platform of the 30S subunit, it bridges several disparate RNA helices of the 16S rRNA. Forms part of the Shine-Dalgarno cleft in the 70S ribosome. This chain is Small ribosomal subunit protein uS11, found in Wolinella succinogenes (strain ATCC 29543 / DSM 1740 / CCUG 13145 / JCM 31913 / LMG 7466 / NCTC 11488 / FDC 602W) (Vibrio succinogenes).